Reading from the N-terminus, the 104-residue chain is SOSS complex subunit C (104 aa).

Ala-2 carries the N-acetylalanine modification. Phosphoserine is present on Ser-50.

It belongs to the SOSS-C family. In terms of assembly, component of the SOSS complex, composed of SOSS-B (SOSS-B1/NABP2 or SOSS-B2/NABP1), SOSS-A/INTS3 and SOSS-C/INIP. SOSS complexes containing SOSS-B1/NABP2 are more abundant than complexes containing SOSS-B2/NABP1. Interacts with INTS3; the interaction is direct.

It is found in the nucleus. Component of the SOSS complex, a multiprotein complex that functions downstream of the MRN complex to promote DNA repair and G2/M checkpoint. The SOSS complex associates with single-stranded DNA at DNA lesions and influences diverse endpoints in the cellular DNA damage response including cell-cycle checkpoint activation, recombinational repair and maintenance of genomic stability. Required for efficient homologous recombination-dependent repair of double-strand breaks (DSBs) and ATM-dependent signaling pathways. In Homo sapiens (Human), this protein is SOSS complex subunit C (INIP).